Here is a 404-residue protein sequence, read N- to C-terminus: 5-azacytidine-induced protein 2 (404 aa).

The homodimerization stretch occupies residues 1–198; it reads MDTLVEDDIC…TELQKARQTG (198 aa). The stretch at 40 to 198 forms a coiled coil; the sequence is ALVTAYEDIK…TELQKARQTG (159 aa). Residues 229–269 are interaction with TBK1 and IKBKE; that stretch reads SDHMQHAYWELRREMANLHLVTRVQAELLRQLKTAAAGKAC. Ser330 bears the Phosphoserine mark. 2 disordered regions span residues 332–351 and 356–390; these read TDNE…HNSY and LEDN…LPPL. Ser365 is modified (phosphoserine).

Homodimer. Interacts with IKBKE, TBK1 and TICAM1. Interacts with TAX1BP1. Interacts with CALCOCO2. In terms of processing, ubiquitinated via 'Lys-48'-linked polyubiquitination by TRIM38, leading to its degradation.

Its subcellular location is the cytoplasm. Its function is as follows. Adapter protein which binds TBK1 and IKBKE playing a role in antiviral innate immunity. Activates serine/threonine-protein kinase TBK1 and facilitates its oligomerization. Enhances the phosphorylation of NF-kappa-B p65 subunit RELA by TBK1. Promotes TBK1-induced as well as TNF-alpha or PMA-induced activation of NF-kappa-B. Participates in IFNB promoter activation via TICAM1. This Rattus norvegicus (Rat) protein is 5-azacytidine-induced protein 2 (Azi2).